Consider the following 520-residue polypeptide: Cytochrome P450 6d3 (520 aa).

C461 serves as a coordination point for heme.

The protein belongs to the cytochrome P450 family. The cofactor is heme.

The protein resides in the endoplasmic reticulum membrane. It localises to the microsome membrane. Functionally, metabolizes pyrethroid insecticides and other xenobiotics. This is Cytochrome P450 6d3 (CYP6D3) from Musca domestica (House fly).